A 43-amino-acid polypeptide reads, in one-letter code: Seed non-specific lipid transfer protein-like (43 aa).

The protein belongs to the plant LTP family. In terms of assembly, homodimer.

Functionally, plant non-specific lipid-transfer proteins transfer phospholipids as well as galactolipids across membranes. May play a role in wax or cutin deposition in the cell walls of expanding epidermal cells and certain secretory tissues. This isoform inhibits the hyphal growth of several fungi in vitro. The protein is Seed non-specific lipid transfer protein-like of Raphanus sativus (Radish).